A 778-amino-acid polypeptide reads, in one-letter code: Serine/threonine-protein kinase BRSK1 (778 aa).

Over residues 1–12 (MSSGAKEGGGGS) the composition is skewed to gly residues. A disordered region spans residues 1-29 (MSSGAKEGGGGSPAYHLPHPHPHPPQHAQ). The Protein kinase domain occupies 34 to 285 (YRLEKTLGKG…LEQIQKHPWY (252 aa)). ATP contacts are provided by residues 40 to 48 (LGKGQTGLV) and Lys-63. Asp-156 functions as the Proton acceptor in the catalytic mechanism. Residue Thr-189 is modified to Phosphothreonine; by LKB1. The UBA domain occupies 314–356 (ELDPDVLESMASLGCFRDRERLHRELRSEEENQEKMIYYLLLD). Residues 362 to 383 (PSCEDQDLPPRNDVDPPRKRVD) show a composition bias toward basic and acidic residues. Residues 362–548 (PSCEDQDLPP…SPGGGVGGAA (187 aa)) are disordered. Phosphoserine occurs at positions 399, 443, 447, and 450. Low complexity predominate over residues 430–457 (SRSVSGASTGLSSSPLSSPRSPVFSFSP). An omega-N-methylarginine mark is found at Arg-466, Arg-481, Arg-484, and Arg-498. Over residues 491 to 508 (QPPPPSARSTPLPGPPGS) the composition is skewed to pro residues. Ser-508 bears the Phosphoserine mark. Residues 509 to 533 (PRSSGGTPLHSPLHTPRASPTGTPG) show a composition bias toward low complexity. Arg-525 is modified (omega-N-methylarginine). Thr-529 and Thr-535 each carry phosphothreonine. Arg-550 bears the Omega-N-methylarginine mark. Thr-583 carries the phosphothreonine modification. Phosphoserine occurs at positions 586, 587, and 601. The disordered stretch occupies residues 719–778 (QPSVQALADEKNGAQTRPAGAPPRSLQPPPGRPDPELSSSPRRGPPKDKKLLATNGTPLP).

Belongs to the protein kinase superfamily. CAMK Ser/Thr protein kinase family. SNF1 subfamily. Requires Mg(2+) as cofactor. Phosphorylated at Thr-189 by STK11/LKB1 in complex with STE20-related adapter-alpha (STRADA) pseudo kinase and CAB39. Not phosphorylated at Thr-189 by CaMKK2. In contrast, it is phosphorylated and activated by CaMKK1. May be inactivated via dephosphorylation of Thr-189 by PP2C. As to expression, widely expressed, with highest levels in brain and testis. Protein levels remain constant throughout the cell cycle.

Its subcellular location is the cytoplasm. The protein resides in the nucleus. It localises to the cytoskeleton. The protein localises to the microtubule organizing center. It is found in the centrosome. Its subcellular location is the synapse. The protein resides in the presynaptic active zone. It localises to the cytoplasmic vesicle. The protein localises to the secretory vesicle. It is found in the synaptic vesicle. It carries out the reaction L-seryl-[protein] + ATP = O-phospho-L-seryl-[protein] + ADP + H(+). The catalysed reaction is L-threonyl-[protein] + ATP = O-phospho-L-threonyl-[protein] + ADP + H(+). The enzyme catalyses L-seryl-[tau protein] + ATP = O-phospho-L-seryl-[tau protein] + ADP + H(+). It catalyses the reaction L-threonyl-[tau protein] + ATP = O-phospho-L-threonyl-[tau protein] + ADP + H(+). With respect to regulation, activated by phosphorylation on Thr-189 by STK11/LKB1. Its function is as follows. Serine/threonine-protein kinase that plays a key role in polarization of neurons and centrosome duplication. Phosphorylates CDC25B, CDC25C, MAPT/TAU, RIMS1, TUBG1, TUBG2 and WEE1. Following phosphorylation and activation by STK11/LKB1, acts as a key regulator of polarization of cortical neurons, probably by mediating phosphorylation of microtubule-associated proteins such as MAPT/TAU at 'Thr-529' and 'Ser-579'. Also regulates neuron polarization by mediating phosphorylation of WEE1 at 'Ser-642' in postmitotic neurons, leading to down-regulate WEE1 activity in polarized neurons. In neurons, localizes to synaptic vesicles and plays a role in neurotransmitter release, possibly by phosphorylating RIMS1. Also acts as a positive regulator of centrosome duplication by mediating phosphorylation of gamma-tubulin (TUBG1 and TUBG2) at 'Ser-131', leading to translocation of gamma-tubulin and its associated proteins to the centrosome. Involved in the UV-induced DNA damage checkpoint response, probably by inhibiting CDK1 activity through phosphorylation and activation of WEE1, and inhibition of CDC25B and CDC25C. The protein is Serine/threonine-protein kinase BRSK1 (BRSK1) of Homo sapiens (Human).